The primary structure comprises 195 residues: HTH-type transcriptional regulator BetI (195 aa).

An HTH tetR-type domain is found at 8–68 (SIRRRQLIDA…ATMRDITSQL (61 aa)). A DNA-binding region (H-T-H motif) is located at residues 31 to 50 (TIAQIARRAGVSTGIISHYF).

It functions in the pathway amine and polyamine biosynthesis; betaine biosynthesis via choline pathway [regulation]. Functionally, repressor involved in the biosynthesis of the osmoprotectant glycine betaine. It represses transcription of the choline transporter BetT and the genes of BetAB involved in the synthesis of glycine betaine. In Escherichia coli O8 (strain IAI1), this protein is HTH-type transcriptional regulator BetI.